Here is a 697-residue protein sequence, read N- to C-terminus: Potassium channel KAT2 (697 aa).

The Cytoplasmic portion of the chain corresponds to 1-63; it reads MSISCTRNFF…PFDPRFRGWE (63 aa). Residues 64–84 traverse the membrane as a helical segment; that stretch reads MWLVILVIYSAWICPFEFAFI. The Extracellular segment spans residues 85 to 91; sequence TYKKDAL. The helical transmembrane segment at 92–112 threads the bilayer; sequence FIIDNIVNGFFAIDIILTFFV. Topologically, residues 113–134 are cytoplasmic; it reads AYLDSHSYLLVDKPKKIAIRYL. A helical membrane pass occupies residues 135-155; it reads STWFAFDVCSTAPFQSLSLLF. Topologically, residues 156–165 are extracellular; it reads KYNGSEIGFR. N-linked (GlcNAc...) asparagine glycosylation occurs at Asn-158. The helical; Voltage-sensor transmembrane segment at 166 to 186 threads the bilayer; the sequence is VLSMLRLWRLRRVSSLFARLE. At 187–200 the chain is on the cytoplasmic side; it reads KDIRFNYFWTRCTK. The chain crosses the membrane as a helical span at residues 201-221; it reads LISVTLFAVHCAGCFAYLIAD. The Extracellular segment spans residues 222 to 248; sequence QYHDPTKTWIGAVYPNFKETSVWSRYV. The segment at residues 249–268 is an intramembrane region (pore-forming); it reads TALYWSITTLTTTGYGDLHA. Residues 269–272 lie on the Extracellular side of the membrane; it reads ENPR. Residues 273–293 traverse the membrane as a helical segment; the sequence is EMLFFVFFMLFNLGFTSYLIG. Over 294–697 the chain is Cytoplasmic; it reads NMTNLVVHWT…HLYILINENS (404 aa). A nucleoside 3',5'-cyclic phosphate is bound at residue 377–496; that stretch reads LFHGVSRNFL…RVIMNNLFMK (120 aa). Residues 629 to 697 enclose the KHA domain; the sequence is RVTIHLKSRD…HLYILINENS (69 aa).

Belongs to the potassium channel family. Plant (TC 1.A.1.4) subfamily. As to quaternary structure, the potassium channel is probably composed of a homo- or heterotetrameric complex of pore-forming subunits. May interact with KAT1. Interacts with SLAC1. Expressed in guard cells of hypocotyls, stems leaves and petioles. Detected also in the phloem of minor veins and in flower at a lower level.

It localises to the membrane. Highly selective inward-rectifying potassium channel. This voltage-dependent channel could mediate long-term potassium influx into guard cells leading to stomatal opening. Assuming opened or closed conformations in response to the voltage difference across the membrane, the channel is activated by hyperpolarization. The channel activity is enhanced upon external acidification. The protein is Potassium channel KAT2 (KAT2) of Arabidopsis thaliana (Mouse-ear cress).